A 158-amino-acid polypeptide reads, in one-letter code: NADH-quinone oxidoreductase subunit B (158 aa).

[4Fe-4S] cluster contacts are provided by C37, C38, C102, and C132.

This sequence belongs to the complex I 20 kDa subunit family. NDH-1 is composed of 14 different subunits. Subunits NuoB, C, D, E, F, and G constitute the peripheral sector of the complex. [4Fe-4S] cluster is required as a cofactor.

The protein localises to the cell inner membrane. The catalysed reaction is a quinone + NADH + 5 H(+)(in) = a quinol + NAD(+) + 4 H(+)(out). Functionally, NDH-1 shuttles electrons from NADH, via FMN and iron-sulfur (Fe-S) centers, to quinones in the respiratory chain. Couples the redox reaction to proton translocation (for every two electrons transferred, four hydrogen ions are translocated across the cytoplasmic membrane), and thus conserves the redox energy in a proton gradient. This is NADH-quinone oxidoreductase subunit B from Nitrosomonas europaea (strain ATCC 19718 / CIP 103999 / KCTC 2705 / NBRC 14298).